Reading from the N-terminus, the 321-residue chain is Nucleotide-binding protein GOX0815 (321 aa).

27-34 contacts ATP; it reads GLSGAGKS. 72–75 provides a ligand contact to GTP; it reads DVRS.

It belongs to the RapZ-like family.

Functionally, displays ATPase and GTPase activities. This is Nucleotide-binding protein GOX0815 from Gluconobacter oxydans (strain 621H) (Gluconobacter suboxydans).